The sequence spans 539 residues: Phosphoenolpyruvate carboxykinase (ATP) (539 aa).

R64, Y206, and K212 together coordinate substrate. ATP is bound by residues K212, H231, and 247 to 255 (GLSGTGKTT). 2 residues coordinate Mn(2+): K212 and H231. D268 contacts Mn(2+). ATP is bound by residues E296, R332, 448-449 (RI), and T454. Residue R332 participates in substrate binding.

This sequence belongs to the phosphoenolpyruvate carboxykinase (ATP) family. As to quaternary structure, monomer. The cofactor is Mn(2+).

It localises to the cytoplasm. It catalyses the reaction oxaloacetate + ATP = phosphoenolpyruvate + ADP + CO2. It functions in the pathway carbohydrate biosynthesis; gluconeogenesis. Functionally, involved in the gluconeogenesis. Catalyzes the conversion of oxaloacetate (OAA) to phosphoenolpyruvate (PEP) through direct phosphoryl transfer between the nucleoside triphosphate and OAA. The polypeptide is Phosphoenolpyruvate carboxykinase (ATP) (Edwardsiella ictaluri (strain 93-146)).